A 638-amino-acid polypeptide reads, in one-letter code: Pentatricopeptide repeat-containing protein At1g59720, chloroplastic/mitochondrial (638 aa).

Residues 1–40 (MVVRSIIVSPPTTITYYHPMSIGLLVHPLSPHIPPASSPS) constitute a chloroplast and mitochondrion transit peptide. 10 PPR repeats span residues 82-112 (TLFL…IENH), 113-148 (SSFM…GESS), 150-184 (DKHT…GFGG), 185-215 (DVYV…MPER), 216-246 (SLVS…MQRS), 250-280 (DGYT…LLRK), 288-318 (DVLV…MQKR), 319-353 (DLAS…RENV), 356-390 (NSVT…YCIE), and 392-422 (ALEH…MPMK). Positions 427 to 510 (IWRSLLDACC…EPGCSSIEIN (84 aa)) are type E motif. Residues 511 to 541 (GISHEFFAGDTSHPQTKQIYQQLKVIDDRLR) are type E(+) motif. Residues 542 to 638 (SIGYLPDRSQ…DGSCSCLDYW (97 aa)) are type DYW motif.

The protein belongs to the PPR family. PCMP-H subfamily. In terms of assembly, interacts with ORRM1. Interacts with VAR3/OZ1.

It localises to the plastid. It is found in the chloroplast. Its subcellular location is the mitochondrion. In terms of biological role, involved in multiple sites RNA editing events in chloroplasts. Involved in the editing of the site 2 of ndhB (ndhB-2) and site 3 of ndhD (ndhD-3) transcripts, which are two plastid-encoded subunits of the chloroplast NAD(P)H dehydrogenase (NDH) complex. Required for the activity of the NDH complex of the photosynthetic electron transport chain. This Arabidopsis thaliana (Mouse-ear cress) protein is Pentatricopeptide repeat-containing protein At1g59720, chloroplastic/mitochondrial (PCMP-H51).